The chain runs to 595 residues: Parathyroid hormone/parathyroid hormone-related peptide receptor (595 aa).

Residues 1–28 (MGAVRIAPGLALLLCCPVLSSAYALVDA) form the signal peptide. Over 29–188 (DDVMTKEEQI…REREVFDRLG (160 aa)) the chain is Extracellular. Intrachain disulfides connect Cys48/Cys117, Cys108/Cys148, and Cys131/Cys170. The tract at residues 66–103 (DKGWASASTSGKPKKEKASGKLYPESEEDKEVPTGSRH) is disordered. 4 N-linked (GlcNAc...) asparagine glycosylation sites follow: Asn151, Asn161, Asn166, and Asn176. Residues 189–209 (MIYTVGYSVSLASLTVAVLIL) traverse the membrane as a helical segment. Residues 210–223 (AYFRRLHCTRNYIH) lie on the Cytoplasmic side of the membrane. Residues 224–244 (MHLFLSFMLRAVSIFVKDAVL) form a helical membrane-spanning segment. The Extracellular segment spans residues 245–294 (YSGATLDEAERLTEEELRAIAQAPPPPTAAAGYAGCRVAVTFFLYFLATN). The helical transmembrane segment at 295-315 (YYWILVEGLYLHSLIFMAFFS) threads the bilayer. The Cytoplasmic segment spans residues 316 to 318 (EKK). A helical membrane pass occupies residues 319 to 339 (YLWGFTVFGWGLPAVFVAVWV). At 340–360 (SVRATLANTGCWDLSSGNKKW) the chain is on the extracellular side. The chain crosses the membrane as a helical span at residues 361 to 381 (IIQVPILASIVLNFILFINIV). The Cytoplasmic portion of the chain corresponds to 382–404 (RVLATKLRETNAGRCDTRQQYRK). A helical membrane pass occupies residues 405 to 425 (LLKSTLVLMPLFGVHYIVFMA). Residues 426-439 (TPYTEVSGTLWQVQ) are Extracellular-facing. A helical transmembrane segment spans residues 440–460 (MHYEMLFNSFQGFFVAIIYCF). At 461–595 (CNGEVQAEIK…LLQEEWETVM (135 aa)) the chain is on the cytoplasmic side. The short motif at 473–476 (WSRW) is the Important for interaction with G proteins element. The segment at 528-595 (TTTATTNGHP…LLQEEWETVM (68 aa)) is disordered. Over residues 547–559 (APTLPATPPATAA) the composition is skewed to low complexity. Thr553 carries the phosphothreonine modification.

This sequence belongs to the G-protein coupled receptor 2 family. Homodimer in the absence of bound ligand. Peptide hormone binding leads to dissociation of the homodimer. N-glycosylated. As to expression, high levels in the kidney, with much lower levels in aorta, heart, lung, prostate, testis, and skeletal muscle.

The protein resides in the cell membrane. Functionally, G-protein-coupled receptor for parathyroid hormone (PTH) and for parathyroid hormone-related peptide (PTHLH). Ligand binding causes a conformation change that triggers signaling via guanine nucleotide-binding proteins (G proteins) and modulates the activity of downstream effectors, such as adenylate cyclase (cAMP). PTH1R is coupled to G(s) G alpha proteins and mediates activation of adenylate cyclase activity. PTHLH dissociates from PTH1R more rapidly than PTH; as consequence, the cAMP response induced by PTHLH decays faster than the response induced by PTH. The polypeptide is Parathyroid hormone/parathyroid hormone-related peptide receptor (PTH1R) (Canis lupus familiaris (Dog)).